Reading from the N-terminus, the 111-residue chain is P antigen family member 2 (111 aa).

Residues 1–66 form a disordered region; the sequence is MSELLRARSQ…NQAVPAFQGP (66 aa). The span at 8–24 shows a compositional bias: polar residues; it reads RSQSSERGNDQESSQPV.

This sequence belongs to the GAGE family.

The polypeptide is P antigen family member 2 (PAGE2) (Homo sapiens (Human)).